The sequence spans 548 residues: Probable malate:quinone oxidoreductase (548 aa).

Positions 521 to 548 (DKPQAADSTPKPQLKPQPVQKEVADIAL) are disordered. Low complexity predominate over residues 530-541 (PKPQLKPQPVQK).

Belongs to the MQO family. It depends on FAD as a cofactor.

The enzyme catalyses (S)-malate + a quinone = a quinol + oxaloacetate. Its pathway is carbohydrate metabolism; tricarboxylic acid cycle; oxaloacetate from (S)-malate (quinone route): step 1/1. The protein is Probable malate:quinone oxidoreductase of Escherichia coli (strain 55989 / EAEC).